The sequence spans 123 residues: MESSLYKKTSGKARRALRVRKALKGSSLKPRLSVVKTNKHIYVQLIDDVEGKTLASISTLAKISKTSGLTKKNQDNAKALGVKIAELGKSLQVDRIVFDRGAHKYHGVVAMVADGAREGGLQF.

Belongs to the universal ribosomal protein uL18 family. Part of the 50S ribosomal subunit; part of the 5S rRNA/L5/L18/L25 subcomplex. Contacts the 5S and 23S rRNAs.

Functionally, this is one of the proteins that bind and probably mediate the attachment of the 5S RNA into the large ribosomal subunit, where it forms part of the central protuberance. This chain is Large ribosomal subunit protein uL18, found in Chlamydia muridarum (strain MoPn / Nigg).